The chain runs to 952 residues: Ubiquitin carboxyl-terminal hydrolase CYLD (952 aa).

Residues 106–589 (CEERLSLFRN…LEIMIGKKKG (484 aa)) form an interaction with TRIP region. CAP-Gly domains lie at 153-198 (LAER…VFVA) and 253-286 (DVLP…VQLC). Residues 311 to 350 (RRPPKLAFMSRGVGDKGSSSHNKPKVTGSTSDPGSRNRSE) form a disordered region. The segment covering 327–346 (GSSSHNKPKVTGSTSDPGSR) has biased composition (polar residues). Serine 383 carries the phosphoserine modification. The interval 386-409 (EMSSDFGHSSPPPQPPSMNSLSSE) is disordered. An interaction with TRAF2 region spans residues 390 to 465 (DFGHSSPPPQ…LPISSGNAHG (76 aa)). Serine 414 and serine 418 each carry phosphoserine. An interaction with IKBKG/NEMO region spans residues 466–680 (LEVGSLAEVK…FTSEEKDPEE (215 aa)). The CAP-Gly 3 domain maps to 488–531 (GQPPGLSDVLAGLELEDECAGCTDGTFRGTRYFTCALKKALFVK). Residues 588-946 (KGIQGHYNSC…DAYMCMYQSP (359 aa)) enclose the USP domain. Catalysis depends on cysteine 597, which acts as the Nucleophile. Residues 777–829 (LEDTPRQCRICGGLAMYECRECYDDPDISAGKIKQFCKTCSTQVHLHPRRLNH) form a B-box region. Positions 784, 787, 795, 798, 813, 816, 821, and 829 each coordinate Zn(2+). Histidine 867 functions as the Proton acceptor in the catalytic mechanism.

The protein belongs to the peptidase C19 family. Interacts (via CAP-Gly domain) with IKBKG/NEMO (via proline-rich C-terminal region). Interacts with TRAF2 and TRIP. Interacts with PLK1, DVL1, DVL3, MAVS, TBK1, IKKE and RIGI. Interacts (via CAP-Gly domain) with microtubules. Interacts with HDAC6 and BCL3. Interacts with MAP3K7. Identified in a complex with TRAF6 and SQSTM1. Interacts with OPTN and SQSTM1. Interacts with CEP350. Interacts with RNF31; the interaction is indirect and is mediated via SPATA2. Interacts with SPATA2 (via the PUB domain); the interaction is direct and recruits CYLD to the LUBAC complex, thereby regulating TNF-alpha-induced necroptosis. Post-translationally, phosphorylated on several serine residues by IKKA and/or IKKB in response to immune stimuli. Phosphorylation requires IKBKG. Phosphorylation abolishes TRAF2 deubiquitination, interferes with the activation of Jun kinases, and strongly reduces CD40-dependent gene activation by NF-kappa-B. Ubiquitinated. Polyubiquitinated in hepatocytes treated with palmitic acid. Ubiquitination is mediated by E3 ligase TRIM47 and leads to proteasomal degradation.

Its subcellular location is the cytoplasm. It localises to the perinuclear region. The protein resides in the cytoskeleton. The protein localises to the cell membrane. It is found in the microtubule organizing center. Its subcellular location is the centrosome. It localises to the spindle. The protein resides in the cilium basal body. It catalyses the reaction Thiol-dependent hydrolysis of ester, thioester, amide, peptide and isopeptide bonds formed by the C-terminal Gly of ubiquitin (a 76-residue protein attached to proteins as an intracellular targeting signal).. Its function is as follows. Deubiquitinase that specifically cleaves 'Lys-63'- and linear 'Met-1'-linked polyubiquitin chains and is involved in NF-kappa-B activation and TNF-alpha-induced necroptosis. Negatively regulates NF-kappa-B activation by deubiquitinating upstream signaling factors. Contributes to the regulation of cell survival, proliferation and differentiation via its effects on NF-kappa-B activation. Negative regulator of Wnt signaling. Inhibits HDAC6 and thereby promotes acetylation of alpha-tubulin and stabilization of microtubules. Plays a role in the regulation of microtubule dynamics, and thereby contributes to the regulation of cell proliferation, cell polarization, cell migration, and angiogenesis. Required for normal cell cycle progress and normal cytokinesis. Inhibits nuclear translocation of NF-kappa-B. Plays a role in the regulation of inflammation and the innate immune response, via its effects on NF-kappa-B activation. Dispensable for the maturation of intrathymic natural killer cells, but required for the continued survival of immature natural killer cells. Negatively regulates TNFRSF11A signaling and osteoclastogenesis. Involved in the regulation of ciliogenesis, allowing ciliary basal bodies to migrate and dock to the plasma membrane; this process does not depend on NF-kappa-B activation. Ability to remove linear ('Met-1'-linked) polyubiquitin chains regulates innate immunity and TNF-alpha-induced necroptosis: recruited to the LUBAC complex via interaction with SPATA2 and restricts linear polyubiquitin formation on target proteins. Regulates innate immunity by restricting linear polyubiquitin formation on RIPK2 in response to NOD2 stimulation. Involved in TNF-alpha-induced necroptosis by removing linear ('Met-1'-linked) polyubiquitin chains from RIPK1, thereby regulating the kinase activity of RIPK1. Negatively regulates intestinal inflammation by removing 'Lys-63' linked polyubiquitin chain of NLRP6, thereby reducing the interaction between NLRP6 and PYCARD/ASC and formation of the NLRP6 inflammasome. Does not catalyze deubiquitination of heterotypic 'Lys-63'-/'Lys-48'-linked branched ubiquitin chains. Removes 'Lys-63' linked polyubiquitin chain of MAP3K7, which inhibits phosphorylation and blocks downstream activation of the JNK-p38 kinase cascades. Also removes 'Lys-63'-linked polyubiquitin chains of MAP3K1 and MA3P3K3, which inhibit their interaction with MAP2K1 and MAP2K2. The protein is Ubiquitin carboxyl-terminal hydrolase CYLD (Cyld) of Mus musculus (Mouse).